The sequence spans 325 residues: HPr kinase/phosphorylase (325 aa).

Active-site residues include His152 and Lys173. Position 167 to 174 (167 to 174 (GESGLGKS)) interacts with ATP. Ser174 contributes to the Mg(2+) binding site. Asp191 acts as the Proton acceptor; for phosphorylation activity. Proton donor; for dephosphorylation activity in catalysis. Positions 215 to 224 (LEVRGIGLLD) are important for the catalytic mechanism of both phosphorylation and dephosphorylation. Glu216 is a binding site for Mg(2+). Residue Arg258 is part of the active site. The interval 279-284 (AVDAGR) is important for the catalytic mechanism of dephosphorylation.

The protein belongs to the HPrK/P family. In terms of assembly, homohexamer. Mg(2+) serves as cofactor.

The catalysed reaction is [HPr protein]-L-serine + ATP = [HPr protein]-O-phospho-L-serine + ADP + H(+). It carries out the reaction [HPr protein]-O-phospho-L-serine + phosphate + H(+) = [HPr protein]-L-serine + diphosphate. In terms of biological role, catalyzes the ATP- as well as the pyrophosphate-dependent phosphorylation of a specific serine residue in HPr, a phosphocarrier protein of the phosphoenolpyruvate-dependent sugar phosphotransferase system (PTS). HprK/P also catalyzes the pyrophosphate-producing, inorganic phosphate-dependent dephosphorylation (phosphorolysis) of seryl-phosphorylated HPr (P-Ser-HPr). The chain is HPr kinase/phosphorylase from Leptothrix cholodnii (strain ATCC 51168 / LMG 8142 / SP-6) (Leptothrix discophora (strain SP-6)).